Here is a 220-residue protein sequence, read N- to C-terminus: GTP cyclohydrolase 1 (220 aa).

Cys-109, His-112, and Cys-180 together coordinate Zn(2+).

It belongs to the GTP cyclohydrolase I family. Homomer.

It catalyses the reaction GTP + H2O = 7,8-dihydroneopterin 3'-triphosphate + formate + H(+). Its pathway is cofactor biosynthesis; 7,8-dihydroneopterin triphosphate biosynthesis; 7,8-dihydroneopterin triphosphate from GTP: step 1/1. The sequence is that of GTP cyclohydrolase 1 from Pectobacterium carotovorum subsp. carotovorum (strain PC1).